We begin with the raw amino-acid sequence, 197 residues long: Shikimate kinase (197 aa).

Glycine 26–arginine 31 contributes to the ATP binding site. Position 30 (serine 30) interacts with Mg(2+). Substrate-binding residues include aspartate 48, arginine 72, and glycine 94. Arginine 132 is a binding site for ATP. Residue arginine 150 coordinates substrate.

It belongs to the shikimate kinase family. In terms of assembly, monomer. The cofactor is Mg(2+).

Its subcellular location is the cytoplasm. It catalyses the reaction shikimate + ATP = 3-phosphoshikimate + ADP + H(+). It functions in the pathway metabolic intermediate biosynthesis; chorismate biosynthesis; chorismate from D-erythrose 4-phosphate and phosphoenolpyruvate: step 5/7. Its function is as follows. Catalyzes the specific phosphorylation of the 3-hydroxyl group of shikimic acid using ATP as a cosubstrate. This is Shikimate kinase from Prochlorococcus marinus (strain MIT 9211).